The following is a 103-amino-acid chain: MSGELSSICGGLPPELCEQLAREQQIIKIKLEKRRYGREVTIIEGLDEREVNLKKLASELKSRLATGGTYKNGRIELQGDHRHRVKEILVEMGFPEENIIIVE.

It belongs to the SUI1 family.

This is Protein translation factor SUI1 homolog from Hyperthermus butylicus (strain DSM 5456 / JCM 9403 / PLM1-5).